Reading from the N-terminus, the 98-residue chain is NADH-ubiquinone oxidoreductase chain 4L (98 aa).

3 consecutive transmembrane segments (helical) span residues 1 to 21 (MTPV…GLAF), 29 to 49 (ALLC…LWAL), and 58 to 78 (VAPM…LALL).

Belongs to the complex I subunit 4L family.

The protein resides in the mitochondrion membrane. The catalysed reaction is a ubiquinone + NADH + 5 H(+)(in) = a ubiquinol + NAD(+) + 4 H(+)(out). Its function is as follows. Core subunit of the mitochondrial membrane respiratory chain NADH dehydrogenase (Complex I) which catalyzes electron transfer from NADH through the respiratory chain, using ubiquinone as an electron acceptor. Part of the enzyme membrane arm which is embedded in the lipid bilayer and involved in proton translocation. In Oncorhynchus clarkii (Cutthroat trout), this protein is NADH-ubiquinone oxidoreductase chain 4L (MT-ND4L).